The primary structure comprises 268 residues: MAGELRIMENKSREDINLSPVSKIEIYSFFDPFSSDCFKLSAILSKLRIEYNQYIRIRHILNPSLKVLTKCQAQSTSNFDNIALAYKAAELQGRVRAERFIHLMQNEIIPKRDIITESMICDCIQNAGIDLEVFKDDLQKSKLTESLKIDLHIAREMEIEQAPSLVFFSEDVHEEGLKVEGLYPYHIYTYIINELMGKPIEKNLPPKLETYIQQQQLVTMEELLTIYEWPEKLLNKELKKLAIQQKIEKLKYPDGDFWKSKMPKIKSK.

Belongs to the SpxH family. As to quaternary structure, interacts with Spx.

The protein resides in the cytoplasm. Its function is as follows. Adapter protein required for efficient degradation of Spx by ClpXP under non-stress conditions. Interaction with Spx stabilizes Spx and exposes the C-terminus of Spx for recognition and proteolysis by ClpXP. The sequence is that of ClpXP adapter protein SpxH from Staphylococcus aureus (strain Mu3 / ATCC 700698).